The sequence spans 452 residues: Chromosomal replication initiator protein DnaA (452 aa).

The segment at 1–84 (MTENEQIFWN…SIEYVFEETQ (84 aa)) is domain I, interacts with DnaA modulators. The tract at residues 84-110 (QSTSNSPQISQNKTAELATETLPFVQN) is domain II. A domain III, AAA+ region region spans residues 111-329 (DLNPKYSFDN…GALKDISLVA (219 aa)). Positions 155, 157, 158, and 159 each coordinate ATP. The tract at residues 330-452 (NFKKLDVITV…EMETIKNKIK (123 aa)) is domain IV, binds dsDNA.

It belongs to the DnaA family. Oligomerizes as a right-handed, spiral filament on DNA at oriC.

It is found in the cytoplasm. Its function is as follows. Plays an essential role in the initiation and regulation of chromosomal replication. ATP-DnaA binds to the origin of replication (oriC) to initiate formation of the DNA replication initiation complex once per cell cycle. Binds the DnaA box (a 9 base pair repeat at the origin) and separates the double-stranded (ds)DNA. Forms a right-handed helical filament on oriC DNA; dsDNA binds to the exterior of the filament while single-stranded (ss)DNA is stabiized in the filament's interior. The ATP-DnaA-oriC complex binds and stabilizes one strand of the AT-rich DNA unwinding element (DUE), permitting loading of DNA polymerase. After initiation quickly degrades to an ADP-DnaA complex that is not apt for DNA replication. Binds acidic phospholipids. The polypeptide is Chromosomal replication initiator protein DnaA (Streptococcus mutans serotype c (strain ATCC 700610 / UA159)).